We begin with the raw amino-acid sequence, 517 residues long: GMP synthase [glutamine-hydrolyzing] (517 aa).

Residues 9-199 (RILILDFGSQ…VLNACGCEGL (191 aa)) enclose the Glutamine amidotransferase type-1 domain. Cys86 serves as the catalytic Nucleophile. Active-site residues include His173 and Glu175. The GMPS ATP-PPase domain occupies 200–392 (WTSASIIEDA…LGLPYNMLYR (193 aa)). 227-233 (SGGVDSS) serves as a coordination point for ATP.

In terms of assembly, homodimer.

The enzyme catalyses XMP + L-glutamine + ATP + H2O = GMP + L-glutamate + AMP + diphosphate + 2 H(+). It participates in purine metabolism; GMP biosynthesis; GMP from XMP (L-Gln route): step 1/1. Functionally, catalyzes the synthesis of GMP from XMP. This Vibrio atlanticus (strain LGP32) (Vibrio splendidus (strain Mel32)) protein is GMP synthase [glutamine-hydrolyzing].